We begin with the raw amino-acid sequence, 539 residues long: MSFKSIFLTGGVVSSLGKGLTAASLALLLERQDLKVAMLKLDPYLNVDPGTMNPYEHGEVYVTDDGVETDLDLGHYHRFSSVQLSKYSTATSGQIYTKVLTKERNGEFLGSTVQVIPHVTNEIINVIQSCADHHKPDILIVEIGGTIGDIESLPFLEAVRQFRCEHPQDCLSIHMTYVPYLRAAKEIKTKPTQHSVQNLRSIGISPDVILCRSEAPLSTEVKRKISLFCNVPEHAVFNAIDLERSIYEMPLLLAKENISDFLLNKLGFSPKPLDLSDWQDLVEALCDKERQHVRIGLVGKYLEHEDAYKSVFESLFHASVPANCSLELVPIAPESEDLLEQLSQCDGCLIPGGFGTRSWEGKISAARYCRERNIPCFGICLGMQALVVEYARNVLDKPLANSMEINPETPDPVVCMMEGQDSVVKGGTMRLGAYPCRIAPGSLASAAYKTDLVQERHRHRYEVNPSYIERLEEHGLKIAGVCPLGELCEIVEIPNHRWMLGVQFHPEFLSKLAKPHPLFIEFIRAAKAYSLEKANHEHR.

An amidoligase domain region spans residues 1–268 (MSFKSIFLTG…SDFLLNKLGF (268 aa)). S14 provides a ligand contact to CTP. UTP is bound at residue S14. Residue 15–20 (SLGKGL) participates in ATP binding. Y55 contributes to the L-glutamine binding site. D72 contributes to the ATP binding site. Mg(2+)-binding residues include D72 and E142. CTP-binding positions include 149-151 (DIE), 188-193 (KTKPTQ), and K224. UTP is bound by residues 188 to 193 (KTKPTQ) and K224. The Glutamine amidotransferase type-1 domain maps to 294-532 (RIGLVGKYLE…IRAAKAYSLE (239 aa)). Position 353 (G353) interacts with L-glutamine. C380 acts as the Nucleophile; for glutamine hydrolysis in catalysis. L-glutamine is bound by residues 381–384 (LGMQ), E404, and R460. Active-site residues include H505 and E507.

This sequence belongs to the CTP synthase family. As to quaternary structure, homotetramer.

The catalysed reaction is UTP + L-glutamine + ATP + H2O = CTP + L-glutamate + ADP + phosphate + 2 H(+). It catalyses the reaction L-glutamine + H2O = L-glutamate + NH4(+). It carries out the reaction UTP + NH4(+) + ATP = CTP + ADP + phosphate + 2 H(+). The protein operates within pyrimidine metabolism; CTP biosynthesis via de novo pathway; CTP from UDP: step 2/2. With respect to regulation, allosterically activated by GTP, when glutamine is the substrate; GTP has no effect on the reaction when ammonia is the substrate. The allosteric effector GTP functions by stabilizing the protein conformation that binds the tetrahedral intermediate(s) formed during glutamine hydrolysis. Inhibited by the product CTP, via allosteric rather than competitive inhibition. Catalyzes the ATP-dependent amination of UTP to CTP with either L-glutamine or ammonia as the source of nitrogen. Regulates intracellular CTP levels through interactions with the four ribonucleotide triphosphates. The protein is CTP synthase of Chlamydia trachomatis serovar A (strain ATCC VR-571B / DSM 19440 / HAR-13).